A 517-amino-acid polypeptide reads, in one-letter code: Amidophosphoribosyltransferase (517 aa).

Methionine 1 carries the N-acetylmethionine modification. A propeptide spanning residues 1 to 11 (MELEESGIREE) is cleaved from the precursor. Cysteine 12 serves as the catalytic Nucleophile. A Glutamine amidotransferase type-2 domain is found at 12–261 (CGVFGCIASG…PGEIVEISRH (250 aa)). Cysteine 280 is a [4Fe-4S] cluster binding site. Serine 327, aspartate 389, and aspartate 390 together coordinate Mg(2+). 3 residues coordinate [4Fe-4S] cluster: cysteine 426, cysteine 503, and cysteine 506.

The protein in the C-terminal section; belongs to the purine/pyrimidine phosphoribosyltransferase family. As to quaternary structure, homotetramer. The cofactor is Mg(2+). [4Fe-4S] cluster serves as cofactor. In terms of tissue distribution, expressed at a high level in brain, heart, liver and stomach.

It catalyses the reaction 5-phospho-beta-D-ribosylamine + L-glutamate + diphosphate = 5-phospho-alpha-D-ribose 1-diphosphate + L-glutamine + H2O. The protein operates within purine metabolism; IMP biosynthesis via de novo pathway; N(1)-(5-phospho-D-ribosyl)glycinamide from 5-phospho-alpha-D-ribose 1-diphosphate: step 1/2. Activated by the substrate 5-phospho-alpha-D-ribosyl-1-pyrophosphate and inhibited by the purine ribonucleotides, the end products of purine biosynthesis. Its function is as follows. Catalyzes the formation of phosphoribosylamine from phosphoribosylpyrophosphate (PRPP) and glutamine. The sequence is that of Amidophosphoribosyltransferase (Ppat) from Rattus norvegicus (Rat).